The primary structure comprises 494 residues: Probable malate:quinone oxidoreductase (494 aa).

It belongs to the MQO family. FAD is required as a cofactor.

The catalysed reaction is (S)-malate + a quinone = a quinol + oxaloacetate. The protein operates within carbohydrate metabolism; tricarboxylic acid cycle; oxaloacetate from (S)-malate (quinone route): step 1/1. The sequence is that of Probable malate:quinone oxidoreductase from Micrococcus luteus (strain ATCC 4698 / DSM 20030 / JCM 1464 / CCM 169 / CCUG 5858 / IAM 1056 / NBRC 3333 / NCIMB 9278 / NCTC 2665 / VKM Ac-2230) (Micrococcus lysodeikticus).